Reading from the N-terminus, the 351-residue chain is Phospho-N-acetylmuramoyl-pentapeptide-transferase (351 aa).

10 helical membrane passes run G3 to I23, T51 to V71, P76 to L96, G113 to F133, F152 to T172, G181 to G201, P223 to F243, I250 to T270, L275 to V295, and F329 to M349.

It belongs to the glycosyltransferase 4 family. MraY subfamily. It depends on Mg(2+) as a cofactor.

The protein resides in the cell membrane. It catalyses the reaction UDP-N-acetyl-alpha-D-muramoyl-L-alanyl-gamma-D-glutamyl-meso-2,6-diaminopimeloyl-D-alanyl-D-alanine + di-trans,octa-cis-undecaprenyl phosphate = di-trans,octa-cis-undecaprenyl diphospho-N-acetyl-alpha-D-muramoyl-L-alanyl-D-glutamyl-meso-2,6-diaminopimeloyl-D-alanyl-D-alanine + UMP. Its pathway is cell wall biogenesis; peptidoglycan biosynthesis. Its function is as follows. Catalyzes the initial step of the lipid cycle reactions in the biosynthesis of the cell wall peptidoglycan: transfers peptidoglycan precursor phospho-MurNAc-pentapeptide from UDP-MurNAc-pentapeptide onto the lipid carrier undecaprenyl phosphate, yielding undecaprenyl-pyrophosphoryl-MurNAc-pentapeptide, known as lipid I. The polypeptide is Phospho-N-acetylmuramoyl-pentapeptide-transferase (Thermobifida fusca (strain YX)).